We begin with the raw amino-acid sequence, 395 residues long: Thyroid hormone receptor beta (395 aa).

The modulating stretch occupies residues 1–31 (MSEPAENCSPRWKDEAIQNGYIPSYLDKDEL). Zn(2+)-binding residues include cysteine 32, cysteine 35, cysteine 49, cysteine 52, cysteine 70, cysteine 76, cysteine 86, and cysteine 89. NR C4-type zinc fingers lie at residues 32-52 (CVVC…CEGC) and 70-94 (CKYE…FKKC). Residues 32–99 (CVVCGDKATG…RFKKCIAVGM (68 aa)) constitute a DNA-binding region (nuclear receptor). Positions 142 to 395 (EEWDLIRMVT…PPLFLEVFED (254 aa)) constitute an NR LBD domain. 3,3',5-triiodo-L-thyronine is bound by residues arginine 216, asparagine 265, and histidine 369. Arginine 216, asparagine 265, and histidine 369 together coordinate L-thyroxine.

It belongs to the nuclear hormone receptor family. NR1 subfamily.

It is found in the nucleus. Functionally, nuclear hormone receptor that can act as a repressor or activator of transcription. High affinity receptor for thyroid hormones, including triiodothyronine and thyroxine. This chain is Thyroid hormone receptor beta (thrb), found in Paralichthys olivaceus (Bastard halibut).